We begin with the raw amino-acid sequence, 149 residues long: Large-conductance mechanosensitive channel (149 aa).

The next 2 membrane-spanning stretches (helical) occupy residues 8–28 and 74–94; these read FIMRGSVLDLAVGVVIGSAFT and IGSVISALITFLITAFVLFLI.

This sequence belongs to the MscL family. In terms of assembly, homopentamer.

It is found in the cell membrane. Functionally, channel that opens in response to stretch forces in the membrane lipid bilayer. May participate in the regulation of osmotic pressure changes within the cell. The sequence is that of Large-conductance mechanosensitive channel from Enterococcus faecalis (strain ATCC 700802 / V583).